Reading from the N-terminus, the 591-residue chain is L-fucose isomerase (591 aa).

Catalysis depends on proton acceptor residues Glu-337 and Asp-361. Positions 337, 361, and 528 each coordinate Mn(2+).

The protein belongs to the L-fucose isomerase family. Homohexamer. It depends on Mn(2+) as a cofactor.

The protein resides in the cytoplasm. The enzyme catalyses L-fucose = L-fuculose. Its pathway is carbohydrate degradation; L-fucose degradation; L-lactaldehyde and glycerone phosphate from L-fucose: step 1/3. Converts the aldose L-fucose into the corresponding ketose L-fuculose. In Escherichia coli (strain SMS-3-5 / SECEC), this protein is L-fucose isomerase.